A 269-amino-acid polypeptide reads, in one-letter code: 3-methyl-2-oxobutanoate hydroxymethyltransferase (269 aa).

Mg(2+) contacts are provided by D52 and D91. 3-methyl-2-oxobutanoate-binding positions include 52–53, D91, and K121; that span reads DT. E123 serves as a coordination point for Mg(2+). Residue E186 is the Proton acceptor of the active site.

Belongs to the PanB family. Homodecamer; pentamer of dimers. Mg(2+) serves as cofactor.

The protein localises to the cytoplasm. The catalysed reaction is 3-methyl-2-oxobutanoate + (6R)-5,10-methylene-5,6,7,8-tetrahydrofolate + H2O = 2-dehydropantoate + (6S)-5,6,7,8-tetrahydrofolate. The protein operates within cofactor biosynthesis; (R)-pantothenate biosynthesis; (R)-pantoate from 3-methyl-2-oxobutanoate: step 1/2. In terms of biological role, catalyzes the reversible reaction in which hydroxymethyl group from 5,10-methylenetetrahydrofolate is transferred onto alpha-ketoisovalerate to form ketopantoate. The polypeptide is 3-methyl-2-oxobutanoate hydroxymethyltransferase (Rhodopirellula baltica (strain DSM 10527 / NCIMB 13988 / SH1)).